A 617-amino-acid polypeptide reads, in one-letter code: Cell pattern formation-associated protein STUA (617 aa).

The disordered stretch occupies residues 1–79 (MNQPAADMYY…PASQMGQNVL (79 aa)). Over residues 24-34 (TVTSGAMSYHS) the composition is skewed to polar residues. Residues 45-58 (PQYAPQPQYSQYGY) show a composition bias toward low complexity. Residues 61-76 (GLTSPQSAQPASQMGQ) show a composition bias toward polar residues. Residues 106-212 (RVTATLWEDE…HNIGALLYHP (107 aa)) enclose the HTH APSES-type domain. The segment at residues 140-161 (GTKLLNVAGMTRGRRDGILKSE) is a DNA-binding region (H-T-H motif). Disordered stretches follow at residues 223 to 274 (AAAE…MGRP), 300 to 451 (SDSG…DSGA), and 463 to 617 (APAV…PRRR). 2 stretches are compositionally biased toward low complexity: residues 305–318 (QWAQGQGMGSAQGA) and 334–345 (PATPASTPPGTT). Composition is skewed to polar residues over residues 346–361 (IQNMQSYQSGAQQYDN) and 368–382 (PSAQQSPYQATNPAS). The span at 438–447 (EHDHDAEYTH) shows a compositional bias: basic and acidic residues. The segment covering 488–509 (PASGRATPRTAAAPQPYYSQQA) has biased composition (low complexity). Polar residues-rich tracts occupy residues 519–533 (QQPSSNLYNVMSNDR) and 553–563 (SMSNGYASQMN). A nuclear localization domain region spans residues 569 to 593 (KRGRDEDDDLQRPSSGGGMDLKRRK). The span at 599–617 (QVPAMAYAPPVMAQQPRRR) shows a compositional bias: low complexity.

The protein belongs to the EFG1/PHD1/stuA family.

The protein resides in the nucleus. Transcription factor that regulates asexual reproduction. Binds the StuA-response elements (StRE) with the consensus sequence 5'-(A/T)CGCG(T/A)N(A/C)-3' at the promoters of target genes. Required for the formation of aerial hyphae, efficient conidiation, and the formation of perithecia. Essential for the generation of normal turgor pressure within the appressorium. Required for infection of intact apple fruit and penetration of onion epidermal cells. This is Cell pattern formation-associated protein STUA from Colletotrichum gloeosporioides (Anthracnose fungus).